A 105-amino-acid chain; its full sequence is uncharacterized protein (105 aa).

This is an uncharacterized protein from Archaeoglobus fulgidus (strain ATCC 49558 / DSM 4304 / JCM 9628 / NBRC 100126 / VC-16).